Here is a 1232-residue protein sequence, read N- to C-terminus: DNA-directed RNA polymerase subunit beta (1232 aa).

The segment at Ser1170–His1232 is disordered. Acidic residues predominate over residues Val1171–Val1180. The segment covering Pro1189–Glu1198 has biased composition (basic and acidic residues). Residues Asp1199–His1232 show a composition bias toward acidic residues.

Belongs to the RNA polymerase beta chain family. In terms of assembly, the RNAP catalytic core consists of 2 alpha, 1 beta, 1 beta' and 1 omega subunit. When a sigma factor is associated with the core the holoenzyme is formed, which can initiate transcription.

It catalyses the reaction RNA(n) + a ribonucleoside 5'-triphosphate = RNA(n+1) + diphosphate. In terms of biological role, DNA-dependent RNA polymerase catalyzes the transcription of DNA into RNA using the four ribonucleoside triphosphates as substrates. In Clostridium botulinum (strain Hall / ATCC 3502 / NCTC 13319 / Type A), this protein is DNA-directed RNA polymerase subunit beta.